Consider the following 361-residue polypeptide: Homocitrate synthase (361 aa).

Residues 1-251 (MVLDSTLREG…KYRLDLLYRV (251 aa)) form the Pyruvate carboxyltransferase domain. Residue Arg-8 participates in 2-oxoglutarate binding. Glu-9 is a binding site for Mg(2+). Positions 68, 128, and 162 each coordinate 2-oxoglutarate. Residues His-188 and His-190 each contribute to the Mg(2+) site. The active-site Proton acceptor is His-282.

This sequence belongs to the alpha-IPM synthase/homocitrate synthase family. Homocitrate synthase LYS20/LYS21 subfamily. It depends on Mg(2+) as a cofactor. Requires Mn(2+) as cofactor.

The enzyme catalyses acetyl-CoA + 2-oxoglutarate + H2O = (2R)-homocitrate + CoA + H(+). The protein operates within amino-acid biosynthesis; L-lysine biosynthesis via AAA pathway; L-alpha-aminoadipate from 2-oxoglutarate: step 1/5. Catalyzes the aldol-type condensation of 2-oxoglutarate with acetyl-CoA to yield homocitrate. Carries out the first step of the alpha-aminoadipate (AAA) lysine biosynthesis pathway. In Pyrococcus abyssi (strain GE5 / Orsay), this protein is Homocitrate synthase.